A 279-amino-acid chain; its full sequence is Urease accessory protein UreD (279 aa).

Belongs to the UreD family. In terms of assembly, ureD, UreF and UreG form a complex that acts as a GTP-hydrolysis-dependent molecular chaperone, activating the urease apoprotein by helping to assemble the nickel containing metallocenter of UreC. The UreE protein probably delivers the nickel.

The protein resides in the cytoplasm. Functionally, required for maturation of urease via the functional incorporation of the urease nickel metallocenter. This is Urease accessory protein UreD from Pseudomonas fluorescens (strain ATCC BAA-477 / NRRL B-23932 / Pf-5).